The sequence spans 331 residues: Biotin synthase (331 aa).

In terms of domain architecture, Radical SAM core spans 43–267 (NTVQVSTLLS…LMPASYVRLS (225 aa)). [4Fe-4S] cluster contacts are provided by C58, C62, and C65. The [2Fe-2S] cluster site is built by C102, C133, C193, and R265.

Belongs to the radical SAM superfamily. Biotin synthase family. Homodimer. It depends on [4Fe-4S] cluster as a cofactor. Requires [2Fe-2S] cluster as cofactor.

It catalyses the reaction (4R,5S)-dethiobiotin + (sulfur carrier)-SH + 2 reduced [2Fe-2S]-[ferredoxin] + 2 S-adenosyl-L-methionine = (sulfur carrier)-H + biotin + 2 5'-deoxyadenosine + 2 L-methionine + 2 oxidized [2Fe-2S]-[ferredoxin]. It participates in cofactor biosynthesis; biotin biosynthesis; biotin from 7,8-diaminononanoate: step 2/2. Functionally, catalyzes the conversion of dethiobiotin (DTB) to biotin by the insertion of a sulfur atom into dethiobiotin via a radical-based mechanism. The protein is Biotin synthase of Alkalilimnicola ehrlichii (strain ATCC BAA-1101 / DSM 17681 / MLHE-1).